The primary structure comprises 200 residues: ATP-dependent Clp protease proteolytic subunit (200 aa).

Residue Ser-99 is the Nucleophile of the active site. The active site involves His-124.

It belongs to the peptidase S14 family. As to quaternary structure, fourteen ClpP subunits assemble into 2 heptameric rings which stack back to back to give a disk-like structure with a central cavity, resembling the structure of eukaryotic proteasomes.

The protein localises to the cytoplasm. The catalysed reaction is Hydrolysis of proteins to small peptides in the presence of ATP and magnesium. alpha-casein is the usual test substrate. In the absence of ATP, only oligopeptides shorter than five residues are hydrolyzed (such as succinyl-Leu-Tyr-|-NHMec, and Leu-Tyr-Leu-|-Tyr-Trp, in which cleavage of the -Tyr-|-Leu- and -Tyr-|-Trp bonds also occurs).. Functionally, cleaves peptides in various proteins in a process that requires ATP hydrolysis. Has a chymotrypsin-like activity. Plays a major role in the degradation of misfolded proteins. The sequence is that of ATP-dependent Clp protease proteolytic subunit from Syntrophomonas wolfei subsp. wolfei (strain DSM 2245B / Goettingen).